Here is a 156-residue protein sequence, read N- to C-terminus: MMVLDKEDGVPMLSVQPKGKQKGCAGCNRKIKDRYLLKALDKYWHEDCLKCACCDCRLGEVGSTLYTKANLILCRRDYLRLFGTTGNCAACSKLIPAFEMVMRARDNVYHLDCFACQLCNQRFCVGDKFFLKNNMILCQVDYEEGHLNGTFESQVQ.

LIM zinc-binding domains lie at 22–84 and 86–148; these read KGCA…LFGT and GNCA…GHLN.

As to expression, expressed in the brain and not in the thymus.

The protein localises to the nucleus. Functionally, may be involved in gene regulation within neural lineage cells potentially by direct DNA binding or by binding to other transcription factors. This chain is Rhombotin-1 (Lmo1), found in Mus musculus (Mouse).